The following is a 272-amino-acid chain: MADTPAEYIQHHLQNLVYGSHPEKGWIIAQTPEEVKAMGFWAVHVDTLGWSLFMGLIFITLFRMAAKKAVTGVPSGLQNMAEMCIEFVQGIVKDTFHGKNPLVAPLALTIFVWVFLMNSLKWIPVDYIPGLAHAMGLPYFKIVPTADPNGTFGISLGVFLLIIFYSIKVKGVGGFTKELSFTPFNHWALIPFNLFLEIIGLLTKPLSLALRLFGNMYAGEVVFILIALLPFYVQWGLNVPWAIFHILVIPLQAFIFMVLTVVYLSAAHEDHH.

7 helical membrane-spanning segments follow: residues 39–59, 103–123, 124–144, 152–172, 181–201, 221–241, and 242–262; these read GFWAVHVDTLGWSLFMGLIFI, VAPLALTIFVWVFLMNSLKWI, PVDYIPGLAHAMGLPYFKIVP, FGISLGVFLLIIFYSIKVKGV, FTPFNHWALIPFNLFLEIIGL, VVFILIALLPFYVQWGLNVPW, and AIFHILVIPLQAFIFMVLTVV.

The protein belongs to the ATPase A chain family. F-type ATPases have 2 components, CF(1) - the catalytic core - and CF(0) - the membrane proton channel. CF(1) has five subunits: alpha(3), beta(3), gamma(1), delta(1), epsilon(1). CF(0) has three main subunits: a(1), b(2) and c(9-12). The alpha and beta chains form an alternating ring which encloses part of the gamma chain. CF(1) is attached to CF(0) by a central stalk formed by the gamma and epsilon chains, while a peripheral stalk is formed by the delta and b chains.

It localises to the cell inner membrane. Functionally, key component of the proton channel; it plays a direct role in the translocation of protons across the membrane. The polypeptide is ATP synthase subunit a (Ectopseudomonas mendocina (strain ymp) (Pseudomonas mendocina)).